We begin with the raw amino-acid sequence, 490 residues long: ATP synthase subunit beta, plastid (490 aa).

Residue 170–177 (GGAGVGKT) coordinates ATP.

It belongs to the ATPase alpha/beta chains family. As to quaternary structure, F-type ATPases have 2 components, CF(1) - the catalytic core - and CF(0) - the membrane proton channel. CF(1) has five subunits: alpha(3), beta(3), gamma(1), delta(1), epsilon(1). CF(0) has four main subunits: a(1), b(1), b'(1) and c(9-12).

Its subcellular location is the plastid membrane. It catalyses the reaction ATP + H2O + 4 H(+)(in) = ADP + phosphate + 5 H(+)(out). Its function is as follows. Produces ATP from ADP in the presence of a proton gradient across the membrane. The catalytic sites are hosted primarily by the beta subunits. The sequence is that of ATP synthase subunit beta, plastid (atpB) from Cuscuta japonica (Japanese dodder).